A 138-amino-acid polypeptide reads, in one-letter code: Ribosome-binding factor A (138 aa).

The protein belongs to the RbfA family. Monomer. Binds 30S ribosomal subunits, but not 50S ribosomal subunits or 70S ribosomes.

The protein resides in the cytoplasm. One of several proteins that assist in the late maturation steps of the functional core of the 30S ribosomal subunit. Associates with free 30S ribosomal subunits (but not with 30S subunits that are part of 70S ribosomes or polysomes). Required for efficient processing of 16S rRNA. May interact with the 5'-terminal helix region of 16S rRNA. The sequence is that of Ribosome-binding factor A from Sodalis glossinidius (strain morsitans).